The following is a 206-amino-acid chain: ATP-dependent dethiobiotin synthetase BioD (206 aa).

12 to 17 (GVGKTI) is an ATP binding site. Residue threonine 16 participates in Mg(2+) binding. The active site involves lysine 32. Residues histidine 46 and glutamate 98 each coordinate Mg(2+). 98–101 (EGAG) lines the ATP pocket.

The protein belongs to the dethiobiotin synthetase family. As to quaternary structure, homodimer. Requires Mg(2+) as cofactor.

Its subcellular location is the cytoplasm. It catalyses the reaction (7R,8S)-7,8-diammoniononanoate + CO2 + ATP = (4R,5S)-dethiobiotin + ADP + phosphate + 3 H(+). Its pathway is cofactor biosynthesis; biotin biosynthesis; biotin from 7,8-diaminononanoate: step 1/2. Catalyzes a mechanistically unusual reaction, the ATP-dependent insertion of CO2 between the N7 and N8 nitrogen atoms of 7,8-diaminopelargonic acid (DAPA, also called 7,8-diammoniononanoate) to form a ureido ring. The protein is ATP-dependent dethiobiotin synthetase BioD of Novosphingobium aromaticivorans (strain ATCC 700278 / DSM 12444 / CCUG 56034 / CIP 105152 / NBRC 16084 / F199).